The following is a 217-amino-acid chain: Monomethylamine corrinoid protein 2 (217 aa).

Residues 1–91 form the B12-binding N-terminal domain; the sequence is MTNTEIFDKL…ELEKNKKEGD (91 aa). Residues 93–217 form the B12-binding domain; sequence AGLAITFVAE…AAKVALEVMK (125 aa). A methylcob(III)alamin-binding site is contributed by H106.

It belongs to the methylamine corrinoid protein family. Can form a complex with MtmB.

Its pathway is one-carbon metabolism; methanogenesis from methylamine. In terms of biological role, acts as a methyl group carrier between MtmB and MtbA. The sequence is that of Monomethylamine corrinoid protein 2 (mtmC2) from Methanosarcina barkeri.